We begin with the raw amino-acid sequence, 427 residues long: TNF receptor-associated factor family protein DDB_G0285149 (427 aa).

The segment at 20–65 (CIVCTDLLSESHDKIQVNQCPHGHCLCSDCWTKQIENKKKECPICR) adopts an RING-type zinc-finger fold. 2 consecutive TRAF-type zinc fingers follow at residues 122 to 178 (THFK…INKD) and 178 to 234 (DHLE…KHQA). In terms of domain architecture, MATH spans 284-415 (KYSNQWVIEN…GNKLTIKFEI (132 aa)).

Belongs to the TNF receptor-associated factor family. A subfamily.

It localises to the cytoplasm. Functionally, probable adapter protein and signal transducer that links members of the tumor necrosis factor receptor family to different signaling pathways by association with the receptor cytoplasmic domain and kinases. The sequence is that of TNF receptor-associated factor family protein DDB_G0285149 from Dictyostelium discoideum (Social amoeba).